We begin with the raw amino-acid sequence, 269 residues long: Thyroxine 5-deiodinase (269 aa).

Over 1-14 (MLPAPHTCCRLLQQ) the chain is Cytoplasmic. A helical; Signal-anchor for type II membrane protein transmembrane segment spans residues 15–35 (LLACCLLLPRFLLTVLLLWLL). At 36–269 (DFPCVRRRVI…TGNGALVIQV (234 aa)) the chain is on the extracellular side. Residue selenocysteine 133 is part of the active site. A non-standard amino acid (selenocysteine) is located at residue selenocysteine 133.

This sequence belongs to the iodothyronine deiodinase family. Monomer. Homodimer. May undergo minor heretodimerization with DIO1 and DIO2.

The protein resides in the cell membrane. It is found in the endosome membrane. It catalyses the reaction 3,3',5'-triiodo-L-thyronine + iodide + A + H(+) = L-thyroxine + AH2. It carries out the reaction 3,3'-diiodo-L-thyronine + iodide + A + H(+) = 3,3',5-triiodo-L-thyronine + AH2. The enzyme catalyses 3-iodo-L-thyronine + iodide + A + H(+) = 3,5-diiodo-L-thyronine + AH2. The catalysed reaction is L-thyronine + iodide + A + H(+) = 3-iodo-L-thyronine + AH2. It catalyses the reaction 3',5'-diiodo-L-thyronine + iodide + A + H(+) = 3,3',5'-triiodo-L-thyronine + AH2. It carries out the reaction 3'-iodo-L-thyronine + iodide + A + H(+) = 3,3'-diiodo-L-thyronine + AH2. The enzyme catalyses 3,3',5'-triiodothyronamine + iodide + A + H(+) = 3,3',5,5'-tetraiodothyronamine + AH2. The catalysed reaction is 3',5'-diiodothyronamine + iodide + A + H(+) = 3,3',5'-triiodothyronamine + AH2. It catalyses the reaction 3,3'-diiodothyronamine + iodide + A + H(+) = 3,3',5-triiodothyronamine + AH2. It carries out the reaction 3-iodothyronamine + iodide + A + H(+) = 3,5-diiodothyronamine + AH2. The enzyme catalyses 3'-iodothyronamine + iodide + A + H(+) = 3,3'-diiodothyronamine + AH2. The catalysed reaction is thyronamine + iodide + A + H(+) = 3-iodothyronamine + AH2. Plays a crucial role in the metabolism of thyroid hormones (TH) and has specific roles in TH activation and inactivation by deiodination. Catalyzes the deiodination of L-thyroxine (T4) to 3,3',5'-triiodothyronine (rT3), 3,5-diiodothyronine (3,5-T2) to 3-monoiodothyronine (3-T1), rT3 to 3',5'-diiodothyronine (3',5'-T2) and 3,3'-diiodothyronine (3,3'-T2) to 3'-monoiodothyronine (3'-T1) via inner-ring deiodination (IRD). Catalyzes the deiodination of 3,5,3'-triiodothyronine (T3) to 3,3'-diiodothyronine (3,3'-T2) via IRD. Catalyzes the deiodination of 3-T1 to L-thyronine (T0) via outer-ring deiodination (ORD). Catalyzes the tyrosyl ring deiodinations of 3,3',5,5'-tetraiodothyronamine, 3,3',5'-triiodothyronamine, 3,5,3'-triiodothyronamine, 3,5-diiodothyronamine, 3,3'-diiodothyronamine and 3-iodothyronamine. This Aquarana catesbeiana (American bullfrog) protein is Thyroxine 5-deiodinase (dio3).